A 404-amino-acid polypeptide reads, in one-letter code: Corticosteroid-binding globulin (404 aa).

The signal sequence occupies residues 1–30 (MAWSTRTMMSLALYTCFLWLLTSGLKTVQS). N-linked (GlcNAc...) asparagine glycosylation is found at N95 and N225. Position 253 (Q253) interacts with cortisol. N259 is a glycosylation site (N-linked (GlcNAc...) asparagine). A cortisol-binding site is contributed by E285. An N-linked (GlcNAc...) asparagine glycan is attached at N326. W392 lines the cortisol pocket.

The protein belongs to the serpin family. Expressed by the liver; secreted in plasma.

The protein resides in the secreted. In terms of biological role, major transport protein for glucocorticoids and progestins in the blood of almost all vertebrate species. This is Corticosteroid-binding globulin (SERPINA6) from Mesocricetus auratus (Golden hamster).